Consider the following 967-residue polypeptide: Importin-alpha re-exporter (967 aa).

The Importin N-terminal domain occupies 20-95 (AEEALKVWEL…KREIINLMLK (76 aa)).

The protein belongs to the XPO2/CSE1 family. Binds with high affinity to importin-alpha only in the presence of RanGTP.

It is found in the cytoplasm. Its subcellular location is the nucleus envelope. Functionally, export receptor for importin alpha. Mediates importin-alpha re-export from the nucleus to the cytoplasm after import substrates have been released into the nucleoplasm. This is Importin-alpha re-exporter (kap109) from Schizosaccharomyces pombe (strain 972 / ATCC 24843) (Fission yeast).